Here is a 244-residue protein sequence, read N- to C-terminus: Tyrosine recombinase XerD-like (244 aa).

The Core-binding (CB) domain occupies 1-73; sequence MRDRISAFLE…ACNQFLYFLY (73 aa). The Tyr recombinase domain maps to 90-244; the sequence is AEKKTEKPEI…KTVLTLEKYR (155 aa). Active-site residues include Lys-150 and Arg-211. Tyr-243 functions as the O-(3'-phospho-DNA)-tyrosine intermediate in the catalytic mechanism.

It belongs to the 'phage' integrase family. XerD-like subfamily.

It is found in the cytoplasm. Putative tyrosine recombinase. Not involved in the cutting and rejoining of the recombining DNA molecules on dif(SL) site. This is Tyrosine recombinase XerD-like from Streptococcus pneumoniae (strain CGSP14).